A 472-amino-acid chain; its full sequence is Putative ankyrin repeat protein L675 (472 aa).

ANK repeat units lie at residues 125–156, 187–216, 265–295, 297–323, 325–351, 352–381, 382–411, and 413–440; these read YKANRFYLGEKFDLGDVEVVKFFIKKGTDIHL, DNFKVLAKICRDGNLELLRLLELNGFNETI, YKTKVLLMAIANNHAELVQYLLTQNPSDKDI, HAMLYAVTTANASLLDYTLKNGGNIHY, NDQALILAVRFNHISMVRKLICLGMDS, NNVFALTMAAENNHQDIVQHLINRGADVNA, NNRSALIAAVKNGHLKIVQMFVNNGADIKI, and DTVIKTACKNGHNNIVKYLLGKGVSCDD.

This is Putative ankyrin repeat protein L675 from Acanthamoeba polyphaga (Amoeba).